A 243-amino-acid polypeptide reads, in one-letter code: 1-(5-phosphoribosyl)-5-[(5-phosphoribosylamino)methylideneamino] imidazole-4-carboxamide isomerase (243 aa).

D8 acts as the Proton acceptor in catalysis. Residue D130 is the Proton donor of the active site.

This sequence belongs to the HisA/HisF family.

It is found in the cytoplasm. It catalyses the reaction 1-(5-phospho-beta-D-ribosyl)-5-[(5-phospho-beta-D-ribosylamino)methylideneamino]imidazole-4-carboxamide = 5-[(5-phospho-1-deoxy-D-ribulos-1-ylimino)methylamino]-1-(5-phospho-beta-D-ribosyl)imidazole-4-carboxamide. It functions in the pathway amino-acid biosynthesis; L-histidine biosynthesis; L-histidine from 5-phospho-alpha-D-ribose 1-diphosphate: step 4/9. The sequence is that of 1-(5-phosphoribosyl)-5-[(5-phosphoribosylamino)methylideneamino] imidazole-4-carboxamide isomerase from Acinetobacter baumannii (strain AB307-0294).